The following is a 120-amino-acid chain: LOB domain-containing protein 8 (120 aa).

The LOB domain occupies 8 to 109 (RPCCVCITKN…AYLHELEEKI (102 aa)).

Belongs to the LOB domain-containing protein family.

The protein is LOB domain-containing protein 8 (LBD8) of Arabidopsis thaliana (Mouse-ear cress).